The primary structure comprises 102 residues: Small ribosomal subunit protein uS17 (102 aa).

Positions 1–15 are enriched in polar residues; the sequence is MTDETASQEASQSTD. Residues 1–20 are disordered; it reads MTDETASQEASQSTDAAAPA.

The protein belongs to the universal ribosomal protein uS17 family. In terms of assembly, part of the 30S ribosomal subunit.

Its function is as follows. One of the primary rRNA binding proteins, it binds specifically to the 5'-end of 16S ribosomal RNA. The protein is Small ribosomal subunit protein uS17 of Frankia casuarinae (strain DSM 45818 / CECT 9043 / HFP020203 / CcI3).